A 183-amino-acid chain; its full sequence is Protein jagunal homolog 1-B (183 aa).

Over 1–39 (MASRAGPRATGTDGSDYQHRERVASHYQMSVALKSEIKK) the chain is Cytoplasmic. A helical transmembrane segment spans residues 40 to 60 (LNIAHAVVWFLVAAQVLVSQL). The Lumenal segment spans residues 61–71 (NLVSHKVVASP). The chain crosses the membrane as a helical span at residues 72 to 92 (YQWEYTYLLSIIPTVFSFMAL). Residues 93–99 (PKNNISY) are Cytoplasmic-facing. A helical membrane pass occupies residues 100 to 120 (LVISMISGGLFCIGPILYGGM). Over 121-137 (EMFPVAQQLYRHGKAYR) the chain is Lumenal. The helical transmembrane segment at 138–158 (FIFGFSAVSIMYLVLIISVQV) threads the bilayer. Topologically, residues 159–183 (HGWQIYYSKKLLDAWFTNTQDKKKK) are cytoplasmic.

Belongs to the jagunal family.

It is found in the endoplasmic reticulum membrane. In terms of biological role, endoplasmic reticulum transmembrane protein involved in vesicle-mediated transport, which is required for neutrophil function. The chain is Protein jagunal homolog 1-B (jagn1b) from Danio rerio (Zebrafish).